Here is a 233-residue protein sequence, read N- to C-terminus: Putative N-acetylmannosamine-6-phosphate 2-epimerase (233 aa).

The protein belongs to the NanE family.

It catalyses the reaction an N-acyl-D-glucosamine 6-phosphate = an N-acyl-D-mannosamine 6-phosphate. It participates in amino-sugar metabolism; N-acetylneuraminate degradation; D-fructose 6-phosphate from N-acetylneuraminate: step 3/5. In terms of biological role, converts N-acetylmannosamine-6-phosphate (ManNAc-6-P) to N-acetylglucosamine-6-phosphate (GlcNAc-6-P). This is Putative N-acetylmannosamine-6-phosphate 2-epimerase from Yersinia pseudotuberculosis serotype O:1b (strain IP 31758).